The chain runs to 373 residues: Queuine tRNA-ribosyltransferase (373 aa).

Residue Asp93 is the Proton acceptor of the active site. Substrate contacts are provided by residues 93–97 (DSGGF), Asp147, Gln189, and Gly216. Residues 247-253 (GVGAPED) are RNA binding. Catalysis depends on Asp266, which acts as the Nucleophile. An RNA binding; important for wobble base 34 recognition region spans residues 271 to 275 (TRIAR). Residues Cys304, Cys306, Cys309, and His335 each contribute to the Zn(2+) site.

Belongs to the queuine tRNA-ribosyltransferase family. In terms of assembly, homodimer. Within each dimer, one monomer is responsible for RNA recognition and catalysis, while the other monomer binds to the replacement base PreQ1. Requires Zn(2+) as cofactor.

It carries out the reaction 7-aminomethyl-7-carbaguanine + guanosine(34) in tRNA = 7-aminomethyl-7-carbaguanosine(34) in tRNA + guanine. The protein operates within tRNA modification; tRNA-queuosine biosynthesis. Catalyzes the base-exchange of a guanine (G) residue with the queuine precursor 7-aminomethyl-7-deazaguanine (PreQ1) at position 34 (anticodon wobble position) in tRNAs with GU(N) anticodons (tRNA-Asp, -Asn, -His and -Tyr). Catalysis occurs through a double-displacement mechanism. The nucleophile active site attacks the C1' of nucleotide 34 to detach the guanine base from the RNA, forming a covalent enzyme-RNA intermediate. The proton acceptor active site deprotonates the incoming PreQ1, allowing a nucleophilic attack on the C1' of the ribose to form the product. After dissociation, two additional enzymatic reactions on the tRNA convert PreQ1 to queuine (Q), resulting in the hypermodified nucleoside queuosine (7-(((4,5-cis-dihydroxy-2-cyclopenten-1-yl)amino)methyl)-7-deazaguanosine). The polypeptide is Queuine tRNA-ribosyltransferase (Halothermothrix orenii (strain H 168 / OCM 544 / DSM 9562)).